The chain runs to 266 residues: Norfluorocurarine synthase 2 (266 aa).

An AB hydrolase-1 domain is found at 11-121 (HFVLVHGAGH…IMPDSTHPPI (111 aa)). Active-site residues include Ser86, Asp216, and His244.

It belongs to the AB hydrolase superfamily. Homodimer. As to expression, mainly expressed in roots.

It catalyses the reaction 17-dehydropreakuammicine + H2O = norfluorocurarine + methanol + CO2. The protein operates within alkaloid biosynthesis. Functionally, hydrolase involved in the biosynthesis of curare monoterpene indole alkaloids (MIAs), natural products such as strychnine, a neurotoxic compound used as a pesticide to control rodents, and its pharmacologically active derivatives, including brucine, used to regulate blood pressure. Curare alkaloids act as animal glycine receptor antagonists. Catalyzes the conversion of dehydropreakuammicine to norfluorocurarine. The protein is Norfluorocurarine synthase 2 of Strychnos nux-vomica (Poison nut).